Consider the following 145-residue polypeptide: L-alanine exporter AlaE (145 aa).

Helical transmembrane passes span F16–M36, L42–Y62, L86–A106, and I111–Y131.

Belongs to the AlaE exporter family.

The protein resides in the cell inner membrane. Functionally, exports L-alanine. This Pectobacterium parmentieri (strain WPP163) (Pectobacterium wasabiae (strain WPP163)) protein is L-alanine exporter AlaE.